Here is a 142-residue protein sequence, read N- to C-terminus: Large ribosomal subunit protein uL11 (142 aa).

This sequence belongs to the universal ribosomal protein uL11 family. As to quaternary structure, part of the ribosomal stalk of the 50S ribosomal subunit. Interacts with L10 and the large rRNA to form the base of the stalk. L10 forms an elongated spine to which L12 dimers bind in a sequential fashion forming a multimeric L10(L12)X complex. In terms of processing, one or more lysine residues are methylated.

In terms of biological role, forms part of the ribosomal stalk which helps the ribosome interact with GTP-bound translation factors. The protein is Large ribosomal subunit protein uL11 of Brucella anthropi (strain ATCC 49188 / DSM 6882 / CCUG 24695 / JCM 21032 / LMG 3331 / NBRC 15819 / NCTC 12168 / Alc 37) (Ochrobactrum anthropi).